Consider the following 166-residue polypeptide: Large ribosomal subunit protein mL49 (166 aa).

Positions 56-78 (RIPDPPKHEHYPTPSGWQPPRDP) are disordered.

It belongs to the mitochondrion-specific ribosomal protein mL49 family. As to quaternary structure, component of the mitochondrial large ribosomal subunit (mt-LSU). Mature mammalian 55S mitochondrial ribosomes consist of a small (28S) and a large (39S) subunit. The 28S small subunit contains a 12S ribosomal RNA (12S mt-rRNA) and 30 different proteins. The 39S large subunit contains a 16S rRNA (16S mt-rRNA), a copy of mitochondrial valine transfer RNA (mt-tRNA(Val)), which plays an integral structural role, and 52 different proteins. Interacts with OXA1L. In terms of tissue distribution, ubiquitous.

The protein resides in the mitochondrion. The protein is Large ribosomal subunit protein mL49 (MRPL49) of Homo sapiens (Human).